We begin with the raw amino-acid sequence, 361 residues long: tRNA-specific 2-thiouridylase MnmA (361 aa).

ATP contacts are provided by residues 8–15 (AMSGGVDS) and M35. Positions 95–97 (NPD) are interaction with target base in tRNA. The active-site Nucleophile is the C100. C100 and C196 are disulfide-bonded. G124 is an ATP binding site. Residues 146 to 148 (KDQ) form an interaction with tRNA region. Residue C196 is the Cysteine persulfide intermediate of the active site. The segment at 303–304 (RY) is interaction with tRNA.

This sequence belongs to the MnmA/TRMU family.

It localises to the cytoplasm. The enzyme catalyses S-sulfanyl-L-cysteinyl-[protein] + uridine(34) in tRNA + AH2 + ATP = 2-thiouridine(34) in tRNA + L-cysteinyl-[protein] + A + AMP + diphosphate + H(+). Functionally, catalyzes the 2-thiolation of uridine at the wobble position (U34) of tRNA, leading to the formation of s(2)U34. The protein is tRNA-specific 2-thiouridylase MnmA of Chlamydia pneumoniae (Chlamydophila pneumoniae).